The following is a 996-amino-acid chain: UPF0182 protein CE0802 (996 aa).

7 consecutive transmembrane segments (helical) span residues 19–39, 63–83, 115–135, 176–196, 212–234, 262–282, and 290–310; these read VTWI…TVGF, IILF…AGYF, ILII…QRSW, STLL…LGGI, GARA…TYWL, KIIL…AIFL, and LAVV…PLML. The interval 920–950 is disordered; it reads VPDVNATEDADATTDGEDETPAAPAAPAGSE. The span at 925 to 939 shows a compositional bias: acidic residues; the sequence is ATEDADATTDGEDET. Residues 940–950 are compositionally biased toward low complexity; the sequence is PAAPAAPAGSE.

It belongs to the UPF0182 family.

The protein resides in the cell membrane. The sequence is that of UPF0182 protein CE0802 from Corynebacterium efficiens (strain DSM 44549 / YS-314 / AJ 12310 / JCM 11189 / NBRC 100395).